The chain runs to 345 residues: Phenylalanine--tRNA ligase alpha subunit (345 aa).

Mg(2+) is bound at residue glutamate 253.

Belongs to the class-II aminoacyl-tRNA synthetase family. Phe-tRNA synthetase alpha subunit type 1 subfamily. As to quaternary structure, tetramer of two alpha and two beta subunits. Mg(2+) is required as a cofactor.

Its subcellular location is the cytoplasm. It catalyses the reaction tRNA(Phe) + L-phenylalanine + ATP = L-phenylalanyl-tRNA(Phe) + AMP + diphosphate + H(+). In Nitratidesulfovibrio vulgaris (strain DP4) (Desulfovibrio vulgaris), this protein is Phenylalanine--tRNA ligase alpha subunit.